Reading from the N-terminus, the 245-residue chain is Lytic switch protein BZLF1 (245 aa).

A transactivation region spans residues 1–167; it reads MMDPNSTSED…RTRKPLQPES (167 aa). Residues T14 and T159 each carry the phosphothreonine modification. The disordered stretch occupies residues 140–167; the sequence is QLADIGAPQPAPAAAPARRTRKPLQPES. Positions 157 to 194 match the Bipartite nuclear localization signal motif; the sequence is RRTRKPLQPESLEECDSELDIKRYKNRVASRKCRAKFK. Residues S167, S173, and S186 each carry the phosphoserine modification. The tract at residues 178–195 is basic motif; sequence KRYKNRVASRKCRAKFKH. The 51-residue stretch at 178–228 folds into the bZIP domain; the sequence is KRYKNRVASRKCRAKFKHLLQHYREVASAKSSENDRLRLLLKQMCPSLDVD. A leucine-zipper region spans residues 196-228; it reads LLQHYREVASAKSSENDRLRLLLKQMCPSLDVD. The tract at residues 229 to 245 is accessory activation domain; that stretch reads SIIPRTPDVLHEDLLNF.

The protein belongs to the bZIP family. Homodimer. Interacts (via b-ZIP domain) with the DNA polymerase processivity factor BMRF1 (via N-terminus); this interaction may inhibit BZLF1-induced transcription of the BMRF1 promoter. Interacts with human UBN1, CRTC2 and RACK1. Interacts (via N-terminus) with human PAX5 (via N-terminus); this interaction inhibits BZLF1-mediated lytic viral reactivation. Interacts (via leucine-zipper domain) with host CEBPA; this interaction induces G1 host cell cycle arrest. Interacts (via C-terminus) with host TP53BP1 (via C-terminus); this interaction is involved in the activation of the viral lytic cycle. Interacts with host chromatin-remodeling ATPase INO80; this interaction participates to the activation of early lytic viral genes by BZLF1. Interacts with host regulator of chromatin SMARCA5/hSNF2H; this interaction participates to the activation of early lytic viral genes by BZLF1. Interacts with host PLSCR1/Phospholipid scramblase 1; this interaction negatively regulates the transcriptional regulatory activity of BZLF1 by preventing the formation of the BZLF1-CBP complex.

It is found in the host nucleus. Transcription factor that acts as a molecular switch to induce the transition from the latent to the lytic or productive phase of the virus cycle. Mediates the switch from the latent to the lytic cycle of infection in cells containing a highly methylated viral genome. Probably binds to silenced chromatin and recruits host chromatin-remodeling enzymes. Regulates this switch by binding to 2 types of ZEBRA response elements (ZREs): the CpG-free AP-1 like elements (latency) and the methylated CpG-containing elements (lytic replication). Activates preferentially the methylated forms of the viral lytic R (BRLF1) and Na (BRRF1) gene promoters, the latters being the first genes activated during Z-mediated reactivation in latently infected cells. BZLF1 and BRLF1 act together to trigger lytic replication. Also binds the lytic origin of replication, oriLyt. Induces G1 cell cycle arrest by stabilizing the host CCAAT/enhancer binding protein CEBPA. This function is important because the lytic cycle preferentially takes place in host cells arrested in G1. The polypeptide is Lytic switch protein BZLF1 (Epstein-Barr virus (strain AG876) (HHV-4)).